The primary structure comprises 336 residues: tRNA N6-adenosine threonylcarbamoyltransferase (336 aa).

Residues histidine 110 and histidine 114 each contribute to the Fe cation site. Substrate-binding positions include 133–137, aspartate 166, glycine 179, and asparagine 271; that span reads LVSGK. Fe cation is bound at residue aspartate 300.

Belongs to the KAE1 / TsaD family. Requires Fe(2+) as cofactor.

The protein resides in the cytoplasm. It carries out the reaction L-threonylcarbamoyladenylate + adenosine(37) in tRNA = N(6)-L-threonylcarbamoyladenosine(37) in tRNA + AMP + H(+). In terms of biological role, required for the formation of a threonylcarbamoyl group on adenosine at position 37 (t(6)A37) in tRNAs that read codons beginning with adenine. Is involved in the transfer of the threonylcarbamoyl moiety of threonylcarbamoyl-AMP (TC-AMP) to the N6 group of A37, together with TsaE and TsaB. TsaD likely plays a direct catalytic role in this reaction. The chain is tRNA N6-adenosine threonylcarbamoyltransferase from Buchnera aphidicola subsp. Acyrthosiphon pisum (strain 5A).